A 329-amino-acid polypeptide reads, in one-letter code: 4-hydroxythreonine-4-phosphate dehydrogenase (329 aa).

Substrate-binding residues include H137 and T138. A divalent metal cation is bound by residues H167, H212, and H267. Residues K275, N284, and R293 each coordinate substrate.

Belongs to the PdxA family. In terms of assembly, homodimer. The cofactor is Zn(2+). It depends on Mg(2+) as a cofactor. Requires Co(2+) as cofactor.

The protein resides in the cytoplasm. The enzyme catalyses 4-(phosphooxy)-L-threonine + NAD(+) = 3-amino-2-oxopropyl phosphate + CO2 + NADH. Its pathway is cofactor biosynthesis; pyridoxine 5'-phosphate biosynthesis; pyridoxine 5'-phosphate from D-erythrose 4-phosphate: step 4/5. Catalyzes the NAD(P)-dependent oxidation of 4-(phosphooxy)-L-threonine (HTP) into 2-amino-3-oxo-4-(phosphooxy)butyric acid which spontaneously decarboxylates to form 3-amino-2-oxopropyl phosphate (AHAP). In Stutzerimonas stutzeri (strain A1501) (Pseudomonas stutzeri), this protein is 4-hydroxythreonine-4-phosphate dehydrogenase.